A 277-amino-acid polypeptide reads, in one-letter code: Diaminopimelate epimerase (277 aa).

3 residues coordinate substrate: N13, Q46, and N66. The active-site Proton donor is the C75. Substrate is bound by residues 76 to 77, N160, N193, and 211 to 212; these read GN and ER. C220 acts as the Proton acceptor in catalysis. Residue 221–222 participates in substrate binding; sequence GS.

The protein belongs to the diaminopimelate epimerase family. In terms of assembly, homodimer.

It localises to the cytoplasm. The catalysed reaction is (2S,6S)-2,6-diaminopimelate = meso-2,6-diaminopimelate. Its pathway is amino-acid biosynthesis; L-lysine biosynthesis via DAP pathway; DL-2,6-diaminopimelate from LL-2,6-diaminopimelate: step 1/1. Its function is as follows. Catalyzes the stereoinversion of LL-2,6-diaminopimelate (L,L-DAP) to meso-diaminopimelate (meso-DAP), a precursor of L-lysine and an essential component of the bacterial peptidoglycan. The sequence is that of Diaminopimelate epimerase from Legionella pneumophila subsp. pneumophila (strain Philadelphia 1 / ATCC 33152 / DSM 7513).